The primary structure comprises 605 residues: Podocalyxin-like protein 2 (605 aa).

The N-terminal stretch at 1–32 (MGRLLRAARLPPLLSPLLLLLVGGAFLGACVA) is a signal peptide. Topologically, residues 33 to 500 (GSDEPGPEGL…ASQVRSDYGT (468 aa)) are extracellular. O-linked (Xyl...) (chondroitin sulfate) serine glycosylation occurs at S79. A sulfotyrosine mark is found at Y97 and Y118. The O-glycosylated at one site stretch occupies residues 129–134 (SIEDTS). Residues 129 to 347 (SIEDTSQAQE…PGDMELTPSS (219 aa)) are disordered. Residue S144 is glycosylated (O-linked (GalNAc...) serine). Residues 162 to 189 (EEEEEEEEEEEREKEEVEKQEEEEEEEL) are compositionally biased toward acidic residues. N-linked (GlcNAc...) asparagine glycosylation occurs at N193. Residues 207–217 (SLTSSSQTPGA) show a composition bias toward polar residues. Composition is skewed to low complexity over residues 241–255 (PSLLLPSVTPTTVTP) and 288–298 (EATAGAAGLSG). N-linked (GlcNAc...) asparagine glycosylation occurs at N395. A helical membrane pass occupies residues 501 to 521 (LFVVLVVIGAICIIIIALGLL). Over 522 to 605 (YNCWQRRLPK…SDVFEEDTHL (84 aa)) the chain is Cytoplasmic. Residues 554–605 (LDVASDSQSEMQEKHPSLNGGGALNGPGSWGALMGGKRDPEDSDVFEEDTHL) are disordered. At S570 the chain carries Phosphoserine. A compositionally biased stretch (gly residues) spans 572–582 (NGGGALNGPGS). The span at 594-605 (EDSDVFEEDTHL) shows a compositional bias: acidic residues. S596 bears the Phosphoserine mark.

This sequence belongs to the podocalyxin family. Homodimer; disulfide-linked. Interacts with SELL, SELE and SELP. Post-translationally, O-glycosylated; contains chondroitin sulfate. Displays sialylated O-linked oligosaccharides. Sulfation is necessary for interaction with SELL. Sialylated O-linked oligosaccharides are necessary for interaction with SELL, SELE and SELP. In terms of tissue distribution, expressed in T-cells, B-cells and monocytes. Expression is higher on memory and germinal center cells than on naive B-cells (at protein level). Highly expressed in brain. Moderately expressed in pancreas, kidney and lymphoid node. Weakly expressed in liver. Detected in both endothelial cells and CD34+ bone marrow cells.

The protein resides in the membrane. In terms of biological role, acts as a ligand for vascular selectins. Mediates rapid rolling of leukocytes over vascular surfaces through high affinity divalent cation-dependent interactions with E-, P- and L-selectins. The chain is Podocalyxin-like protein 2 (PODXL2) from Homo sapiens (Human).